Reading from the N-terminus, the 417-residue chain is Gamma-glutamyl phosphate reductase (417 aa).

The protein belongs to the gamma-glutamyl phosphate reductase family.

It localises to the cytoplasm. The catalysed reaction is L-glutamate 5-semialdehyde + phosphate + NADP(+) = L-glutamyl 5-phosphate + NADPH + H(+). It participates in amino-acid biosynthesis; L-proline biosynthesis; L-glutamate 5-semialdehyde from L-glutamate: step 2/2. Catalyzes the NADPH-dependent reduction of L-glutamate 5-phosphate into L-glutamate 5-semialdehyde and phosphate. The product spontaneously undergoes cyclization to form 1-pyrroline-5-carboxylate. This is Gamma-glutamyl phosphate reductase from Escherichia coli O6:K15:H31 (strain 536 / UPEC).